An 844-amino-acid polypeptide reads, in one-letter code: Elongation factor 2 (844 aa).

The 239-residue stretch at 17–255 (TNVRNMSVIA…LWGDNYFNPK (239 aa)) folds into the tr-type G domain. 26-33 (AHVDHGKS) is a GTP binding site. Phosphothreonine occurs at positions 57 and 59. GTP is bound by residues 160 to 163 (NKVD) and 215 to 217 (SGL). H700 is modified (diphthamide).

The protein belongs to the TRAFAC class translation factor GTPase superfamily. Classic translation factor GTPase family. EF-G/EF-2 subfamily.

It is found in the cytoplasm. It carries out the reaction GTP + H2O = GDP + phosphate + H(+). Catalyzes the GTP-dependent ribosomal translocation step during translation elongation. During this step, the ribosome changes from the pre-translocational (PRE) to the post-translocational (POST) state as the newly formed A-site-bound peptidyl-tRNA and P-site-bound deacylated tRNA move to the P and E sites, respectively. Catalyzes the coordinated movement of the two tRNA molecules, the mRNA and conformational changes in the ribosome. This Neurospora crassa (strain ATCC 24698 / 74-OR23-1A / CBS 708.71 / DSM 1257 / FGSC 987) protein is Elongation factor 2 (cot-3).